Here is a 189-residue protein sequence, read N- to C-terminus: Peptidyl-tRNA hydrolase (189 aa).

Residue Tyr14 participates in tRNA binding. The Proton acceptor role is filled by His19. Tyr64, Asn66, and Asn112 together coordinate tRNA.

It belongs to the PTH family. In terms of assembly, monomer.

The protein localises to the cytoplasm. It catalyses the reaction an N-acyl-L-alpha-aminoacyl-tRNA + H2O = an N-acyl-L-amino acid + a tRNA + H(+). In terms of biological role, hydrolyzes ribosome-free peptidyl-tRNAs (with 1 or more amino acids incorporated), which drop off the ribosome during protein synthesis, or as a result of ribosome stalling. Its function is as follows. Catalyzes the release of premature peptidyl moieties from peptidyl-tRNA molecules trapped in stalled 50S ribosomal subunits, and thus maintains levels of free tRNAs and 50S ribosomes. This Finegoldia magna (strain ATCC 29328 / DSM 20472 / WAL 2508) (Peptostreptococcus magnus) protein is Peptidyl-tRNA hydrolase.